The sequence spans 221 residues: Lectin L6 (221 aa).

6 repeat units span residues 1 to 38, 39 to 75, 76 to 113, 114 to 150, 151 to 188, and 189 to 221. Positions 1–221 are 6 X approximate tandem repeats; sequence VQWHQIPGKL…NSVDNIYRSG (221 aa). Cysteine 32 and cysteine 36 are joined by a disulfide. Cysteine 108 and cysteine 112 are disulfide-bonded. Cysteines 183 and 187 form a disulfide.

The protein belongs to the tectonin family. In terms of tissue distribution, hemocytes.

It is found in the cytoplasmic vesicle. It localises to the secretory vesicle. Functionally, lipopolysaccharide-binding protein with Gram-negative antibacterial activity. Binds zinc and calcium. The protein is Lectin L6 of Tachypleus tridentatus (Japanese horseshoe crab).